The chain runs to 70 residues: DNA-directed RNA polymerase subunit omega (70 aa).

It belongs to the RNA polymerase subunit omega family. As to quaternary structure, the RNAP catalytic core consists of 2 alpha, 1 beta, 1 beta' and 1 omega subunit. When a sigma factor is associated with the core the holoenzyme is formed, which can initiate transcription.

The enzyme catalyses RNA(n) + a ribonucleoside 5'-triphosphate = RNA(n+1) + diphosphate. Functionally, promotes RNA polymerase assembly. Latches the N- and C-terminal regions of the beta' subunit thereby facilitating its interaction with the beta and alpha subunits. The chain is DNA-directed RNA polymerase subunit omega from Thermoanaerobacter sp. (strain X514).